A 136-amino-acid polypeptide reads, in one-letter code: MLQPKRTKFRKVQTGRNRGLAKGTDVSFGEFGLKAVGRGRLTARQIEAARRAMTRHVKRQGKIWIRVFPDKPITEKPLEVRQGKGKGNVEYWVAQIQPGKVMYEMGGVPEELAREAFRLAARKLPFKTTFVTKQVM.

It belongs to the universal ribosomal protein uL16 family. Part of the 50S ribosomal subunit.

Its function is as follows. Binds 23S rRNA and is also seen to make contacts with the A and possibly P site tRNAs. The chain is Large ribosomal subunit protein uL16 from Vibrio campbellii (strain ATCC BAA-1116).